The sequence spans 148 residues: Lysozyme C (148 aa).

The N-terminal stretch at 1–18 (MKAPLLLGLLLLSVTVQG) is a signal peptide. The C-type lysozyme domain maps to 19-148 (KVFERCDLAR…VSQYVRNCGV (130 aa)). Cystine bridges form between cysteine 24/cysteine 146, cysteine 48/cysteine 134, cysteine 83/cysteine 99, and cysteine 95/cysteine 113. Active-site residues include glutamate 53 and aspartate 71.

This sequence belongs to the glycosyl hydrolase 22 family. As to quaternary structure, monomer.

The protein localises to the secreted. It carries out the reaction Hydrolysis of (1-&gt;4)-beta-linkages between N-acetylmuramic acid and N-acetyl-D-glucosamine residues in a peptidoglycan and between N-acetyl-D-glucosamine residues in chitodextrins.. In terms of biological role, lysozymes have primarily a bacteriolytic function; those in tissues and body fluids are associated with the monocyte-macrophage system and enhance the activity of immunoagents. This Leptonychotes weddellii (Weddell seal) protein is Lysozyme C (LYZ).